The primary structure comprises 252 residues: MKILVSNDDGVLAPGIKILANELSTLGEVKVVAPDRNRSGASNSLTLTQPLRVKQLDNGYYSVDGTPTDCVHLALTGFLEPMADIVVSGINEGANLGDDVLYSGTVAAAMEGRYLGLPAIAISMVGDNIQHYETAAIIAKQLVIKLSANKLPSQTILNVNVPDLPLNQIRGLQVTRLGTRHSAEPIIKEYDPRGRPIYWVGPPGIEADAGAGTDFFAIKTGHVSITPLHLDMTHYKLFDHLSNLLNEICIEN.

A divalent metal cation-binding residues include aspartate 8, aspartate 9, serine 39, and asparagine 91.

Belongs to the SurE nucleotidase family. It depends on a divalent metal cation as a cofactor.

The protein resides in the cytoplasm. The enzyme catalyses a ribonucleoside 5'-phosphate + H2O = a ribonucleoside + phosphate. In terms of biological role, nucleotidase that shows phosphatase activity on nucleoside 5'-monophosphates. This is 5'-nucleotidase SurE from Legionella pneumophila (strain Lens).